We begin with the raw amino-acid sequence, 163 residues long: uncharacterized protein (163 aa).

The interval 128–163 (PKKEKIKKAKRKKKGAKRASKKQKAKSKSARKSRRV) is disordered. Residues 129–163 (KKEKIKKAKRKKKGAKRASKKQKAKSKSARKSRRV) show a composition bias toward basic residues.

This is an uncharacterized protein from Sulfurisphaera tokodaii (strain DSM 16993 / JCM 10545 / NBRC 100140 / 7) (Sulfolobus tokodaii).